The primary structure comprises 515 residues: Bifunctional purine biosynthesis protein PurH (515 aa).

In terms of domain architecture, MGS-like spans 1-145 (MTKRALISVS…KNHASVTVVV (145 aa)).

It belongs to the PurH family.

The catalysed reaction is (6R)-10-formyltetrahydrofolate + 5-amino-1-(5-phospho-beta-D-ribosyl)imidazole-4-carboxamide = 5-formamido-1-(5-phospho-D-ribosyl)imidazole-4-carboxamide + (6S)-5,6,7,8-tetrahydrofolate. The enzyme catalyses IMP + H2O = 5-formamido-1-(5-phospho-D-ribosyl)imidazole-4-carboxamide. The protein operates within purine metabolism; IMP biosynthesis via de novo pathway; 5-formamido-1-(5-phospho-D-ribosyl)imidazole-4-carboxamide from 5-amino-1-(5-phospho-D-ribosyl)imidazole-4-carboxamide (10-formyl THF route): step 1/1. Its pathway is purine metabolism; IMP biosynthesis via de novo pathway; IMP from 5-formamido-1-(5-phospho-D-ribosyl)imidazole-4-carboxamide: step 1/1. In Streptococcus equi subsp. zooepidemicus (strain H70), this protein is Bifunctional purine biosynthesis protein PurH.